Consider the following 343-residue polypeptide: Holliday junction branch migration complex subunit RuvB (343 aa).

Residues 1 to 181 (MDRIVEIEKV…FGMQFRLQFY (181 aa)) form a large ATPase domain (RuvB-L) region. ATP is bound by residues Leu20, Arg21, Gly62, Lys65, Thr66, Thr67, 128–130 (EDF), Arg171, Tyr181, and Arg218. Thr66 is a Mg(2+) binding site. The small ATPAse domain (RuvB-S) stretch occupies residues 182 to 252 (TDNELARIIS…RAKSSLDSLG (71 aa)). The head domain (RuvB-H) stretch occupies residues 255-343 (DLGFDEMDLK…EKQNKGLFNE (89 aa)). Residues Arg308 and Arg313 each coordinate DNA.

Belongs to the RuvB family. Homohexamer. Forms an RuvA(8)-RuvB(12)-Holliday junction (HJ) complex. HJ DNA is sandwiched between 2 RuvA tetramers; dsDNA enters through RuvA and exits via RuvB. An RuvB hexamer assembles on each DNA strand where it exits the tetramer. Each RuvB hexamer is contacted by two RuvA subunits (via domain III) on 2 adjacent RuvB subunits; this complex drives branch migration. In the full resolvosome a probable DNA-RuvA(4)-RuvB(12)-RuvC(2) complex forms which resolves the HJ.

Its subcellular location is the cytoplasm. The enzyme catalyses ATP + H2O = ADP + phosphate + H(+). The RuvA-RuvB-RuvC complex processes Holliday junction (HJ) DNA during genetic recombination and DNA repair, while the RuvA-RuvB complex plays an important role in the rescue of blocked DNA replication forks via replication fork reversal (RFR). RuvA specifically binds to HJ cruciform DNA, conferring on it an open structure. The RuvB hexamer acts as an ATP-dependent pump, pulling dsDNA into and through the RuvAB complex. RuvB forms 2 homohexamers on either side of HJ DNA bound by 1 or 2 RuvA tetramers; 4 subunits per hexamer contact DNA at a time. Coordinated motions by a converter formed by DNA-disengaged RuvB subunits stimulates ATP hydrolysis and nucleotide exchange. Immobilization of the converter enables RuvB to convert the ATP-contained energy into a lever motion, pulling 2 nucleotides of DNA out of the RuvA tetramer per ATP hydrolyzed, thus driving DNA branch migration. The RuvB motors rotate together with the DNA substrate, which together with the progressing nucleotide cycle form the mechanistic basis for DNA recombination by continuous HJ branch migration. Branch migration allows RuvC to scan DNA until it finds its consensus sequence, where it cleaves and resolves cruciform DNA. In Campylobacter fetus subsp. fetus (strain 82-40), this protein is Holliday junction branch migration complex subunit RuvB.